We begin with the raw amino-acid sequence, 216 residues long: Protein Syd (216 aa).

Belongs to the Syd family.

It is found in the cell inner membrane. In terms of biological role, interacts with the SecY protein in vivo. May bind preferentially to an uncomplexed state of SecY, thus functioning either as a chelating agent for excess SecY in the cell or as a regulatory factor that negatively controls the translocase function. This is Protein Syd from Shewanella sp. (strain ANA-3).